A 415-amino-acid chain; its full sequence is F-box protein At3g13820 (415 aa).

The region spanning 1-50 (MTTMSNLPAEVLEEILSRTPVTSLRTMRSTCKKWNNLSKKKIIPEAARKQ) is the F-box domain. Disordered regions lie at residues 209–229 (NDYD…EDDD) and 387–415 (KQPK…KIIG). The segment covering 210 to 229 (DYDDQEDEEEEDDEEYEDDD) has biased composition (acidic residues). Over residues 403–415 (NKNKKGRKIKIIG) the composition is skewed to basic residues.

This Arabidopsis thaliana (Mouse-ear cress) protein is F-box protein At3g13820.